A 479-amino-acid chain; its full sequence is FAD-dependent monooxygenase sdcF (479 aa).

The FAD-binding PCMH-type domain occupies 40 to 213 (AQLPPSCFVL…TLFDMEAFST (174 aa)). His79 is subject to Pros-8alpha-FAD histidine.

It belongs to the oxygen-dependent FAD-linked oxidoreductase family. FAD is required as a cofactor.

The protein operates within secondary metabolite biosynthesis. Functionally, FAD-dependent monooxygenase; part of the gene cluster that mediates the biosynthesis of the polyenes aspernidgulenes. The carbon backbone of aspernidgulenes is synthesized by the HR-PKS sdgA, which accepts acetyl-CoA as the starter unit and performs malonyl-CoA extensions as well as regioselective methylation and reduction. The resulting nonaketide offloads the HR-PKS by intramolecular lactonization to yield the 5,6-dihydro-alpha-pyrone-containing hexaenoic acids preaspernidgulene A1 and A2. The FAD-dependent monooxygenase sdgC then installs the first epoxide on the penultimate double bond. Subsequently, the FAD-dependent monooxygenase sdgF presumably generates a ketone intermediate through Meinwald rearrangement involving a hydride shift. Next, sdgC introduces another epoxide on the last olefin of the ketone intermediate after E/Z isomerization. The epoxide hydrolase sdgD then catalyzes stereospecific cyclization of the 5,6-dihydro-alpha-pyrone and opening of the epoxide ring to form an oxygenated trimethylcyclopentanone and an oxabicyclo[2.2.1]heptane unit. Finally, the bicyclic unit undergoes hydrolytic cleavage, either spontaneously or catalyzed by sdgD, to assemble the dimethyl-gamma-lactone moiety in aspernidgulene A1. The protein is FAD-dependent monooxygenase sdcF of Emericella nidulans (strain FGSC A4 / ATCC 38163 / CBS 112.46 / NRRL 194 / M139) (Aspergillus nidulans).